A 101-amino-acid polypeptide reads, in one-letter code: Large ribosomal subunit protein bL20 (101 aa).

It belongs to the bacterial ribosomal protein bL20 family.

Its function is as follows. Binds directly to 23S ribosomal RNA and is necessary for the in vitro assembly process of the 50S ribosomal subunit. It is not involved in the protein synthesizing functions of that subunit. The polypeptide is Large ribosomal subunit protein bL20 (rplT) (Carsonella ruddii (strain PV)).